Here is a 552-residue protein sequence, read N- to C-terminus: MAGUK p55 subfamily member 2 (552 aa).

L27 domains follow at residues 8-59 and 60-118; these read SESA…EETK and LEAV…YETP. Position 42 is a phosphoserine (S42). A Phosphothreonine modification is found at T117. S121 carries the post-translational modification Phosphoserine. Residues 140-219 enclose the PDZ domain; it reads MVGIRKTAGE…SVILKILPSY (80 aa). Residues 225-293 enclose the SH3 domain; sequence PRQVFVKCHF…PSQLLEEKRK (69 aa). The Guanylate kinase-like domain occupies 350–537; the sequence is RKTLVLIGAQ…TFRELQTAME (188 aa).

This sequence belongs to the MAGUK family. In terms of assembly, can homomultimerise. Interacts with CACNG2. Interacts (via the SH3-Guanylate kinase-like sub-module) with DLG4/PSD95 and DLGAP1/GKAP. Interacts (via the PDZ domain) with CADM1 (via C-terminus). Interacts with KCNN2/SK2 (via N-terminal domain). Interacts with SRC. In terms of processing, phosphorylated by SRC. Expressed in hippocampal neurons.

The protein localises to the cell projection. Its subcellular location is the dendrite. The protein resides in the postsynaptic density. It localises to the cytoplasm. It is found in the cytoskeleton. The protein localises to the membrane. Postsynaptic MAGUK scaffold protein that links CADM1 cell adhesion molecules to core components of the postsynaptic density. In CA1 pyramidal neurons, required for synaptic KCNN2-containing channel function and long-term potentiation expression. Seems to negatively regulate SRC function in epithelial cells. This is MAGUK p55 subfamily member 2 from Rattus norvegicus (Rat).